Consider the following 551-residue polypeptide: Solute carrier family 22 member 13 (551 aa).

Residues 1-20 (MAQFVQVLAEIGDFGRFQIQ) are Cytoplasmic-facing. Residues 21–41 (LLILLCVLNFLSPFYFFAHVF) form a helical membrane-spanning segment. Over 42-138 (MVLDEPHHCA…LVCDRKHLKD (97 aa)) the chain is Extracellular. N57, N61, N92, and N104 each carry an N-linked (GlcNAc...) asparagine glycan. Residues 139 to 159 (TTQSVFMAGLLVGTLMFGPLC) form a helical membrane-spanning segment. The Cytoplasmic portion of the chain corresponds to 160-167 (DRIGRKAT). The chain crosses the membrane as a helical span at residues 168–188 (ILAQLLLFTLIGLATAFVPSF). At 189 to 195 (ELYMALR) the chain is on the extracellular side. The chain crosses the membrane as a helical span at residues 196 to 216 (FAVATAVAGLSFSNVTLLTEW). The Cytoplasmic segment spans residues 217-224 (VGPSWRTQ). A helical membrane pass occupies residues 225-245 (AVVLAQCNFSLGQMVLAGLAY). Topologically, residues 246-251 (GFRNWR) are extracellular. A helical transmembrane segment spans residues 252 to 272 (LLQITGTAPGLLLFFYFWALP). Residues 273 to 332 (ESARWLLTRGRMDEAIQLIQKAASVNRRKLSPELMNQLVPEKTGPSGNALDLFRHPQLRK) are Cytoplasmic-facing. The chain crosses the membrane as a helical span at residues 333-353 (VTLIIFCVWFVDSLGYYGLSL). Residue Q354 is a topological domain, extracellular. The helical transmembrane segment at 355–375 (VGDFGLDVYLTQLIFGAVEVP) threads the bilayer. Residues 376-397 (ARCSSIFMMQRFGRKWSQLGTL) lie on the Cytoplasmic side of the membrane. The helical transmembrane segment at 398–418 (VLGGLMCIIIIFIPADLPVVV) threads the bilayer. The Extracellular portion of the chain corresponds to 419–427 (TMLAVVGKM). The helical transmembrane segment at 428–448 (ATAAAFTISYVYSAELFPTIL) threads the bilayer. The Cytoplasmic segment spans residues 449 to 452 (RQTG). A helical membrane pass occupies residues 453 to 473 (MGLVGIFSRIGGILTPLVILL). Residues 474–478 (GEYHA) are Extracellular-facing. Residues 479–499 (ALPMLIYGSLPIVAGLLCTLL) traverse the membrane as a helical segment. Residues 500-551 (PETHGQGLKDTLQDLELGPHPRSPKSVPSEKETEAKGRTSSPGVAFVSSTYF) are Cytoplasmic-facing. The segment at 511–551 (LQDLELGPHPRSPKSVPSEKETEAKGRTSSPGVAFVSSTYF) is disordered. The segment covering 527-536 (PSEKETEAKG) has biased composition (basic and acidic residues). Residues 537-551 (RTSSPGVAFVSSTYF) are compositionally biased toward polar residues.

It belongs to the major facilitator (TC 2.A.1) superfamily. Organic cation transporter (TC 2.A.1.19) family. In terms of processing, glycosylated. In terms of tissue distribution, ubiquitous. Highly expressed in kidneys and to a weaker extent in brain, heart, and intestine. In kidneys, expressed in proximal convoluted tubule. In kidneys, also expressed in cortical collecting duct, whereas glomerulus and thick ascending limb exhibit no expression.

Its subcellular location is the apical cell membrane. The enzyme catalyses urate(out) + (S)-lactate(in) = urate(in) + (S)-lactate(out). It carries out the reaction urate(out) + succinate(in) = urate(in) + succinate(out). The catalysed reaction is urate(out) + glutathione(in) = urate(in) + glutathione(out). It catalyses the reaction nicotinate(in) + urate(out) = nicotinate(out) + urate(in). The enzyme catalyses orotate(out) + a carboxylate(in) = orotate(in) + a carboxylate(out). Anion antiporter that mediates the transport of urate, orotate and nicotinate in exchange for organic or inorganic anions. Translocates urate and orotate across the apical membrane of proximal tubule epithelial cells and involved in urate renal reabsorption. Possibly involved in orotate renal reabsorption and nicotinate intestinal reabsorption. Mediates urate uptake by an exchange with organic anions such as (S)-lactate, succinate, glutathione and nicotinate. Urate and orotate transports are Cl(-)-dependent. Shows similar transport characteristics as the urate/orotate renal antiporter SLC22A12/URAT1 and may act as a compensator of SLC22A12/URAT1 in certain conditions. The sequence is that of Solute carrier family 22 member 13 from Homo sapiens (Human).